The chain runs to 237 residues: Uridylate kinase (237 aa).

Residue 12 to 15 (KLSG) participates in ATP binding. The segment at 20–25 (GEDGLG) is involved in allosteric activation by GTP. G54 contributes to the UMP binding site. Positions 55 and 59 each coordinate ATP. Residues D74 and 135–142 (TGNPFFTT) contribute to the UMP site. Residues T162, Y168, and D171 each coordinate ATP.

This sequence belongs to the UMP kinase family. In terms of assembly, homohexamer.

It is found in the cytoplasm. It catalyses the reaction UMP + ATP = UDP + ADP. The protein operates within pyrimidine metabolism; CTP biosynthesis via de novo pathway; UDP from UMP (UMPK route): step 1/1. Its activity is regulated as follows. Allosterically activated by GTP. Inhibited by UTP. Functionally, catalyzes the reversible phosphorylation of UMP to UDP. The protein is Uridylate kinase of Haemophilus influenzae (strain 86-028NP).